The sequence spans 284 residues: 4-hydroxybenzoate octaprenyltransferase (284 aa).

The next 9 helical transmembrane spans lie at 19–39 (IPIL…SHGL), 42–62 (ISYL…GCII), 85–105 (GQLS…VAFI), 107–127 (VLFL…LAIL), 134–154 (FFAI…FMAF), 165–185 (AWIF…IYAL), 211–231 (ILLF…YCDF), 233–253 (SFFY…YFLY), and 261–281 (CINA…MAVI).

It belongs to the UbiA prenyltransferase family. Requires Mg(2+) as cofactor.

Its subcellular location is the cell inner membrane. It catalyses the reaction all-trans-octaprenyl diphosphate + 4-hydroxybenzoate = 4-hydroxy-3-(all-trans-octaprenyl)benzoate + diphosphate. It functions in the pathway cofactor biosynthesis; ubiquinone biosynthesis. Its function is as follows. Catalyzes the prenylation of para-hydroxybenzoate (PHB) with an all-trans polyprenyl group. Mediates the second step in the final reaction sequence of ubiquinone-8 (UQ-8) biosynthesis, which is the condensation of the polyisoprenoid side chain with PHB, generating the first membrane-bound Q intermediate 3-octaprenyl-4-hydroxybenzoate. The polypeptide is 4-hydroxybenzoate octaprenyltransferase (Francisella tularensis subsp. novicida (strain U112)).